The following is a 280-amino-acid chain: Acyl-[acyl-carrier-protein]--UDP-N-acetylglucosamine O-acyltransferase (280 aa).

The protein belongs to the transferase hexapeptide repeat family. LpxA subfamily. In terms of assembly, homotrimer.

The protein resides in the cytoplasm. It carries out the reaction a (3R)-hydroxyacyl-[ACP] + UDP-N-acetyl-alpha-D-glucosamine = a UDP-3-O-[(3R)-3-hydroxyacyl]-N-acetyl-alpha-D-glucosamine + holo-[ACP]. It functions in the pathway glycolipid biosynthesis; lipid IV(A) biosynthesis; lipid IV(A) from (3R)-3-hydroxytetradecanoyl-[acyl-carrier-protein] and UDP-N-acetyl-alpha-D-glucosamine: step 1/6. In terms of biological role, involved in the biosynthesis of lipid A, a phosphorylated glycolipid that anchors the lipopolysaccharide to the outer membrane of the cell. The sequence is that of Acyl-[acyl-carrier-protein]--UDP-N-acetylglucosamine O-acyltransferase from Chlamydia muridarum (strain MoPn / Nigg).